The following is a 59-amino-acid chain: UPF0181 protein YoaH (59 aa).

The protein belongs to the UPF0181 family.

This Shigella flexneri protein is UPF0181 protein YoaH.